Reading from the N-terminus, the 601-residue chain is Elongation factor 4 (601 aa).

The 183-residue stretch at 5-187 (IRKKNFCIIA…AICKHVPSPR (183 aa)) folds into the tr-type G domain. Residues 17–22 (DHGKST) and 134–137 (NKID) each bind GTP.

Belongs to the TRAFAC class translation factor GTPase superfamily. Classic translation factor GTPase family. LepA subfamily.

The protein resides in the cell inner membrane. The catalysed reaction is GTP + H2O = GDP + phosphate + H(+). Functionally, required for accurate and efficient protein synthesis under certain stress conditions. May act as a fidelity factor of the translation reaction, by catalyzing a one-codon backward translocation of tRNAs on improperly translocated ribosomes. Back-translocation proceeds from a post-translocation (POST) complex to a pre-translocation (PRE) complex, thus giving elongation factor G a second chance to translocate the tRNAs correctly. Binds to ribosomes in a GTP-dependent manner. This Borrelia garinii subsp. bavariensis (strain ATCC BAA-2496 / DSM 23469 / PBi) (Borreliella bavariensis) protein is Elongation factor 4.